The following is an 88-amino-acid chain: Phosphocarrier protein HPr (88 aa).

The region spanning 1 to 88 is the HPr domain; the sequence is MEKREFNIIA…DTMKKEGLAE (88 aa). The Pros-phosphohistidine intermediate role is filled by histidine 15. Serine 46 bears the Phosphoserine; by HPrK/P mark.

The protein belongs to the HPr family.

The protein localises to the cytoplasm. Its activity is regulated as follows. Phosphorylation on Ser-46 inhibits the phosphoryl transfer from enzyme I to HPr. Functionally, general (non sugar-specific) component of the phosphoenolpyruvate-dependent sugar phosphotransferase system (sugar PTS). This major carbohydrate active-transport system catalyzes the phosphorylation of incoming sugar substrates concomitantly with their translocation across the cell membrane. The phosphoryl group from phosphoenolpyruvate (PEP) is transferred to the phosphoryl carrier protein HPr by enzyme I. Phospho-HPr then transfers it to the PTS EIIA domain. In terms of biological role, P-Ser-HPr interacts with the catabolite control protein A (CcpA), forming a complex that binds to DNA at the catabolite response elements cre, operator sites preceding a large number of catabolite-regulated genes. Thus, P-Ser-HPr is a corepressor in carbon catabolite repression (CCR), a mechanism that allows bacteria to coordinate and optimize the utilization of available carbon sources. P-Ser-HPr also plays a role in inducer exclusion, in which it probably interacts with several non-PTS permeases and inhibits their transport activity. The polypeptide is Phosphocarrier protein HPr (ptsH) (Lacticaseibacillus casei (Lactobacillus casei)).